Reading from the N-terminus, the 352-residue chain is GTPase Obg (352 aa).

Positions M1 to L159 constitute an Obg domain. Residues S160 to D327 form the OBG-type G domain. GTP contacts are provided by residues G166–S173, F191–E195, D212–G215, N279–D282, and S308–D310. Residues S173 and T193 each coordinate Mg(2+).

This sequence belongs to the TRAFAC class OBG-HflX-like GTPase superfamily. OBG GTPase family. As to quaternary structure, monomer. Requires Mg(2+) as cofactor.

The protein resides in the cytoplasm. An essential GTPase which binds GTP, GDP and possibly (p)ppGpp with moderate affinity, with high nucleotide exchange rates and a fairly low GTP hydrolysis rate. Plays a role in control of the cell cycle, stress response, ribosome biogenesis and in those bacteria that undergo differentiation, in morphogenesis control. The polypeptide is GTPase Obg (Anaplasma phagocytophilum (strain HZ)).